An 806-amino-acid chain; its full sequence is Minor extracellular protease Vpr (806 aa).

The signal sequence occupies residues 1–28 (MKKGIIRFLLVSFVLFFALSTGITGVQA). A propeptide spanning residues 29 to 160 (APASSKTSAD…TISEDAVSPQ (132 aa)) is cleaved from the precursor. Positions 57-142 (TVIVELKEKS…AVYPNVTYKT (86 aa)) constitute an Inhibitor I9 domain. The Peptidase S8 domain maps to 158-597 (SPQMDDSAPY…ARIMNAIKAD (440 aa)). Catalysis depends on charge relay system residues aspartate 189 and histidine 233. One can recognise a PA domain in the interval 383–461 (ELVEAGIGEA…KLSLEDGEKL (79 aa)). The active-site Charge relay system is the serine 534.

Belongs to the peptidase S8 family. In terms of processing, probably undergoes C-terminal processing or proteolysis. Auto-processed to form active enzymes of several different molecular weights.

It localises to the secreted. Its subcellular location is the cell wall. Activity is inhibited by phenylmethylsulfonyl fluoride (PMSF), but not by EDTA. Serine protease. Involved in the production of the competence and sporulation stimulating factor CSF. Is directly involved in the processing of pro-CSF to CSF. Can also cleave pro-PhrA to PhrA, but cannot cleave pro-PhrE. Shows fibrinolytic activity in vitro. Not essential for growth or sporulation. This is Minor extracellular protease Vpr from Bacillus subtilis (strain 168).